Here is a 652-residue protein sequence, read N- to C-terminus: Bifunctional protein ThiO/ThiG (652 aa).

The thiO stretch occupies residues 1–366; it reads MTRDIVIIGG…HYSRFQKQAS (366 aa). FAD is bound by residues 5-19 and 44-46; these read IVII…AIAV and AGM. Glu-52 is a glycine binding site. Val-173 contributes to the FAD binding site. Glycine contacts are provided by Arg-301 and Arg-327. 325 to 331 serves as a coordination point for FAD; that stretch reads HYRNGIL. The segment at 393–652 is thiG; sequence SLIIAGKSFH…ASSPVTGTIS (260 aa). Lys-494 (schiff-base intermediate with DXP) is an active-site residue. 1-deoxy-D-xylulose 5-phosphate contacts are provided by residues Gly-555, 581 to 582, and 603 to 604; these read AG and NS.

This sequence in the N-terminal section; belongs to the DAO family. ThiO subfamily. In the C-terminal section; belongs to the ThiG family. In terms of assembly, interacts with ThiH and ThiS. FAD is required as a cofactor.

The protein localises to the cytoplasm. The catalysed reaction is glycine + O2 + H2O = glyoxylate + H2O2 + NH4(+). The enzyme catalyses [ThiS sulfur-carrier protein]-C-terminal-Gly-aminoethanethioate + 2-iminoacetate + 1-deoxy-D-xylulose 5-phosphate = [ThiS sulfur-carrier protein]-C-terminal Gly-Gly + 2-[(2R,5Z)-2-carboxy-4-methylthiazol-5(2H)-ylidene]ethyl phosphate + 2 H2O + H(+). Its pathway is cofactor biosynthesis; thiamine diphosphate biosynthesis. In terms of biological role, catalyzes the FAD-dependent oxidative deamination of glycine. Is essential for thiamine biosynthesis since the oxidation of glycine catalyzed by ThiO generates the glycine imine intermediate (dehydroglycine) required for the biosynthesis of the thiazole ring of thiamine pyrophosphate. Catalyzes the rearrangement of 1-deoxy-D-xylulose 5-phosphate (DXP) to produce the thiazole phosphate moiety of thiamine. Sulfur is provided by the thiocarboxylate moiety of the carrier protein ThiS. In vitro, sulfur can be provided by H(2)S. This is Bifunctional protein ThiO/ThiG (thiO/thiG) from Trichormus variabilis (strain ATCC 29413 / PCC 7937) (Anabaena variabilis).